The primary structure comprises 260 residues: Ribose-5-phosphate isomerase A (260 aa).

Substrate-binding positions include 33-36 (TGST), 89-92 (DGAD), and 102-105 (KGGG). Glu-111 (proton acceptor) is an active-site residue. Lys-129 contacts substrate.

The protein belongs to the ribose 5-phosphate isomerase family. In terms of assembly, homodimer.

The enzyme catalyses aldehydo-D-ribose 5-phosphate = D-ribulose 5-phosphate. The protein operates within carbohydrate degradation; pentose phosphate pathway; D-ribose 5-phosphate from D-ribulose 5-phosphate (non-oxidative stage): step 1/1. Its function is as follows. Catalyzes the reversible conversion of ribose-5-phosphate to ribulose 5-phosphate. This is Ribose-5-phosphate isomerase A from Dinoroseobacter shibae (strain DSM 16493 / NCIMB 14021 / DFL 12).